A 363-amino-acid polypeptide reads, in one-letter code: 3,4-dihydroxy-2-butanone 4-phosphate synthase (363 aa).

The segment at 1 to 201 (MTLSTAQEII…VADLIEYRNK (201 aa)) is DHBP synthase. D-ribulose 5-phosphate is bound by residues 27–28 (RE), Asp32, 140–144 (RAGHT), and Glu164. Position 28 (Glu28) interacts with Mg(2+). His143 serves as a coordination point for Mg(2+). The tract at residues 202–363 (YETMIERISE…GLEIVEYVCS (162 aa)) is GTP cyclohydrolase II-like.

This sequence in the N-terminal section; belongs to the DHBP synthase family. The protein in the C-terminal section; belongs to the GTP cyclohydrolase II family. It depends on Mg(2+) as a cofactor. The cofactor is Mn(2+).

It catalyses the reaction D-ribulose 5-phosphate = (2S)-2-hydroxy-3-oxobutyl phosphate + formate + H(+). Its pathway is cofactor biosynthesis; riboflavin biosynthesis; 2-hydroxy-3-oxobutyl phosphate from D-ribulose 5-phosphate: step 1/1. Functionally, catalyzes the conversion of D-ribulose 5-phosphate to formate and 3,4-dihydroxy-2-butanone 4-phosphate. This chain is 3,4-dihydroxy-2-butanone 4-phosphate synthase (ribB), found in Photobacterium phosphoreum.